We begin with the raw amino-acid sequence, 594 residues long: Aspartate--tRNA(Asp/Asn) ligase (594 aa).

Glu-175 contributes to the L-aspartate binding site. The segment at 199 to 202 (QIYK) is aspartate. The L-aspartate site is built by Arg-221 and His-454. 221–223 (RDE) lines the ATP pocket. ATP is bound at residue Glu-488. Arg-495 contributes to the L-aspartate binding site. 540–543 (GIDR) contacts ATP.

The protein belongs to the class-II aminoacyl-tRNA synthetase family. Type 1 subfamily. Homodimer.

The protein localises to the cytoplasm. It carries out the reaction tRNA(Asx) + L-aspartate + ATP = L-aspartyl-tRNA(Asx) + AMP + diphosphate. Functionally, aspartyl-tRNA synthetase with relaxed tRNA specificity since it is able to aspartylate not only its cognate tRNA(Asp) but also tRNA(Asn). Reaction proceeds in two steps: L-aspartate is first activated by ATP to form Asp-AMP and then transferred to the acceptor end of tRNA(Asp/Asn). This Chelativorans sp. (strain BNC1) protein is Aspartate--tRNA(Asp/Asn) ligase.